The primary structure comprises 279 residues: Oxygen-dependent coproporphyrinogen-III oxidase (279 aa).

Ser-102 is a substrate binding site. A divalent metal cation is bound by residues His-106 and His-116. Residue His-116 is the Proton donor of the active site. 118–120 (NTR) provides a ligand contact to substrate. Residues His-149 and His-179 each coordinate a divalent metal cation. The segment at 244–279 (YVEFNLLYDRGTKFGLMTDGNVEAILMSLPPEVKFN) is important for dimerization.

It belongs to the aerobic coproporphyrinogen-III oxidase family. In terms of assembly, homodimer. A divalent metal cation serves as cofactor.

It is found in the cytoplasm. The catalysed reaction is coproporphyrinogen III + O2 + 2 H(+) = protoporphyrinogen IX + 2 CO2 + 2 H2O. It participates in porphyrin-containing compound metabolism; protoporphyrin-IX biosynthesis; protoporphyrinogen-IX from coproporphyrinogen-III (O2 route): step 1/1. Involved in the heme biosynthesis. Catalyzes the aerobic oxidative decarboxylation of propionate groups of rings A and B of coproporphyrinogen-III to yield the vinyl groups in protoporphyrinogen-IX. This chain is Oxygen-dependent coproporphyrinogen-III oxidase, found in Rickettsia conorii (strain ATCC VR-613 / Malish 7).